The chain runs to 278 residues: Small ribosomal subunit protein uS2 (278 aa).

The segment at alanine 235–glutamate 278 is disordered. Positions valine 252–aspartate 261 are enriched in basic and acidic residues.

It belongs to the universal ribosomal protein uS2 family.

The chain is Small ribosomal subunit protein uS2 from Parabacteroides distasonis (strain ATCC 8503 / DSM 20701 / CIP 104284 / JCM 5825 / NCTC 11152).